Here is a 120-residue protein sequence, read N- to C-terminus: uncharacterized protein (120 aa).

A coiled-coil region spans residues 45-78 (QLISESLKIAQKDLMEVRKELRKRKIAIRETERD).

This is an uncharacterized protein from Bacillus subtilis (strain 168).